A 174-amino-acid polypeptide reads, in one-letter code: Mediator of RNA polymerase II transcription subunit 30 (174 aa).

Residues 113–166 (VEDDSSKLEDRMANQLRAASEERREVLEVNKKLKQKNQQLKMIMDQLRNLIWEI) adopt a coiled-coil conformation.

It belongs to the Mediator complex subunit 30 family. Component of the Mediator complex.

Its subcellular location is the nucleus. Functionally, component of the Mediator complex, a coactivator involved in the regulated transcription of nearly all RNA polymerase II-dependent genes. Mediator functions as a bridge to convey information from gene-specific regulatory proteins to the basal RNA polymerase II transcription machinery. Mediator is recruited to promoters by direct interactions with regulatory proteins and serves as a scaffold for the assembly of a functional preinitiation complex with RNA polymerase II and the general transcription factors. This chain is Mediator of RNA polymerase II transcription subunit 30 (med30), found in Danio rerio (Zebrafish).